We begin with the raw amino-acid sequence, 251 residues long: MRKPIIAGNWKMNKTLSEAVSFVEEVKGQIPAASAVDAVVCSPALFLERLVAATEGTDLQVGAQNMHFEKNGAFTGEISPVALSDLKVGYVVLGHSERREMFAETDESVNKKTIAAFEHGLTPIVCCGETLEERESGKTFDLVAGQVTKALAGLTEEQVKATVIAYEPIWAIGTGKSSSSADANEVCAHIRKVVAEVVSPAAAEAVRIQYGGSVKPENIKEYMAQSDIDGALVGGASLEPASFLGLLGAVK.

9–11 (NWK) provides a ligand contact to substrate. Residue His95 is the Electrophile of the active site. Residue Glu167 is the Proton acceptor of the active site. Substrate is bound by residues Gly173, Ser213, and 234–235 (GG). Ser213 carries the post-translational modification Phosphoserine.

This sequence belongs to the triosephosphate isomerase family. As to quaternary structure, homodimer.

The protein localises to the cytoplasm. It carries out the reaction D-glyceraldehyde 3-phosphate = dihydroxyacetone phosphate. The protein operates within carbohydrate biosynthesis; gluconeogenesis. It functions in the pathway carbohydrate degradation; glycolysis; D-glyceraldehyde 3-phosphate from glycerone phosphate: step 1/1. Involved in the gluconeogenesis. Catalyzes stereospecifically the conversion of dihydroxyacetone phosphate (DHAP) to D-glyceraldehyde-3-phosphate (G3P). This Bacillus anthracis protein is Triosephosphate isomerase.